We begin with the raw amino-acid sequence, 598 residues long: Ceramide transfer protein (598 aa).

Positions Met-1–Gly-11 are enriched in polar residues. Positions Met-1–Val-24 are disordered. Residues Pro-23 to Thr-117 form the PH domain. A Phosphoserine modification is found at Ser-126. Position 132 is a phosphoserine; by PKD (Ser-132). Ser-135 carries the phosphoserine modification. A disordered region spans residues Asp-202 to Asn-221. A coiled-coil region spans residues Lys-268 to Lys-301. Ser-315 carries the phosphoserine modification. The FFAT signature appears at Glu-321–Glu-327. Residues Gly-363 to Ala-592 form the START domain. An N-acylsphing-4-enine is bound by residues Glu-446, Gln-467, Asn-504, and Tyr-553.

In terms of assembly, interacts with VAPA and VAPB. Interaction with VAPB is less efficient than with VAPA. Interacts (via FFAT motif) with the MOSPD2 (via MSP domain). In terms of processing, phosphorylation on Ser-132 decreases the affinity toward phosphatidylinositol 4-phosphate at Golgi membranes and reduces ceramide transfer activity. Inactivated by hyperphosphorylation of serine residues by CSNK1G2/CK1 that triggers dissociation from the Golgi complex, thus down-regulating ER-to-Golgi transport of ceramide and sphingomyelin synthesis.

It localises to the cytoplasm. It is found in the golgi apparatus. The protein localises to the endoplasmic reticulum. It carries out the reaction N-hexadecanoylsphing-4-enine(in) = N-hexadecanoylsphing-4-enine(out). In terms of biological role, shelters ceramides and diacylglycerol lipids inside its START domain and mediates the intracellular trafficking of ceramides and diacylglycerol lipids in a non-vesicular manner. This chain is Ceramide transfer protein (CERT1), found in Cricetulus griseus (Chinese hamster).